A 446-amino-acid polypeptide reads, in one-letter code: Phosphoglucosamine mutase (446 aa).

Catalysis depends on S101, which acts as the Phosphoserine intermediate. Residues S101, D240, D242, and D244 each contribute to the Mg(2+) site. S101 is subject to Phosphoserine.

Belongs to the phosphohexose mutase family. The cofactor is Mg(2+). In terms of processing, activated by phosphorylation.

It catalyses the reaction alpha-D-glucosamine 1-phosphate = D-glucosamine 6-phosphate. Its function is as follows. Catalyzes the conversion of glucosamine-6-phosphate to glucosamine-1-phosphate. This chain is Phosphoglucosamine mutase, found in Coxiella burnetii (strain RSA 331 / Henzerling II).